An 82-amino-acid chain; its full sequence is T-complex protein 1 subunit gamma (82 aa).

Position 15 (Gly-15) interacts with ADP. Gly-15 contacts ATP. Asp-66 contacts Mg(2+). Residues Gly-67, Thr-68, Thr-69, and Ser-70 each contribute to the ADP site. Gly-67, Thr-68, and Thr-69 together coordinate ATP.

Belongs to the TCP-1 chaperonin family. In terms of assembly, component of the chaperonin-containing T-complex (TRiC), a hexadecamer composed of two identical back-to-back stacked rings enclosing a protein folding chamber. Each ring is made up of eight different subunits: TCP1/CCT1, CCT2, CCT3, CCT4, CCT5, CCT6A/CCT6, CCT7, CCT8. Interacts with PACRG. Interacts with DNAAF4. Interacts with DLEC1.

The protein resides in the cytoplasm. The enzyme catalyses ATP + H2O = ADP + phosphate + H(+). Functionally, component of the chaperonin-containing T-complex (TRiC), a molecular chaperone complex that assists the folding of actin, tubulin and other proteins upon ATP hydrolysis. The TRiC complex mediates the folding of WRAP53/TCAB1, thereby regulating telomere maintenance. As part of the TRiC complex may play a role in the assembly of BBSome, a complex involved in ciliogenesis regulating transports vesicles to the cilia. The protein is T-complex protein 1 subunit gamma (CCT3) of Sus scrofa (Pig).